A 444-amino-acid chain; its full sequence is Glutamyl-tRNA reductase (444 aa).

Substrate-binding positions include 49–52 (TCNR), Ser109, 114–116 (ETQ), and Gln120. The active-site Nucleophile is the Cys50. NADP(+) is bound at residue 189–194 (GAGKMG).

This sequence belongs to the glutamyl-tRNA reductase family. In terms of assembly, homodimer.

It carries out the reaction (S)-4-amino-5-oxopentanoate + tRNA(Glu) + NADP(+) = L-glutamyl-tRNA(Glu) + NADPH + H(+). The protein operates within porphyrin-containing compound metabolism; protoporphyrin-IX biosynthesis; 5-aminolevulinate from L-glutamyl-tRNA(Glu): step 1/2. In terms of biological role, catalyzes the NADPH-dependent reduction of glutamyl-tRNA(Glu) to glutamate 1-semialdehyde (GSA). This Bacillus cereus (strain ZK / E33L) protein is Glutamyl-tRNA reductase.